Consider the following 216-residue polypeptide: Outer-membrane lipoprotein LolB (216 aa).

An N-terminal signal peptide occupies residues 1 to 24; that stretch reads MNNLNYFTKISASCAALALMTLAG. Cys-25 carries N-palmitoyl cysteine lipidation. The S-diacylglycerol cysteine moiety is linked to residue Cys-25.

This sequence belongs to the LolB family. In terms of assembly, monomer.

The protein resides in the cell outer membrane. In terms of biological role, plays a critical role in the incorporation of lipoproteins in the outer membrane after they are released by the LolA protein. The polypeptide is Outer-membrane lipoprotein LolB (Shewanella loihica (strain ATCC BAA-1088 / PV-4)).